We begin with the raw amino-acid sequence, 212 residues long: Thymidylate kinase (212 aa).

Residue 10-17 (GPDGAGKT) participates in ATP binding.

It belongs to the thymidylate kinase family.

It carries out the reaction dTMP + ATP = dTDP + ADP. Functionally, phosphorylation of dTMP to form dTDP in both de novo and salvage pathways of dTTP synthesis. This is Thymidylate kinase from Lactobacillus delbrueckii subsp. bulgaricus (strain ATCC 11842 / DSM 20081 / BCRC 10696 / JCM 1002 / NBRC 13953 / NCIMB 11778 / NCTC 12712 / WDCM 00102 / Lb 14).